We begin with the raw amino-acid sequence, 236 residues long: Hydantoin racemase (236 aa).

In terms of assembly, homohexamer, homoheptamer or homooctamer.

The enzyme catalyses a D-5-monosubstituted hydantoin = a L-5-monosubstituted hydantoin. It carries out the reaction D-5-benzylhydantoin = L-5-benzylhydantoin. Completely inhibited by HgCl(2) and iodoacetamide. Stimulated by dithiothreitol. Involved in the asymmetric conversion of racemic 5-substituted hydantoins to the corresponding L-amino acids. Catalyzes the racemization via enolization of D- and L-5-monosubstituted hydantoins. It shows preference for hydantoins with arylalkyl side chains such as 5-benzylhydantoin (BH) and, to a lesser extent, 5-(3-indolylmethylene)hydantoin (IMH). The chain is Hydantoin racemase from Paenarthrobacter aurescens (Arthrobacter aurescens).